Consider the following 578-residue polypeptide: NADPH oxidase 4 (578 aa).

Topologically, residues 1–16 (MAVSWRSWLANEGVKH) are cytoplasmic. A helical membrane pass occupies residues 17–37 (LCLFIWLSMNVLLFWKTFLLY). Over 38-62 (NQGPEYHYLHQMLGLGLCLSRASAS) the chain is Extracellular. Positions 58–303 (RASASVLNLN…YCAERLYRYI (246 aa)) constitute a Ferric oxidoreductase domain. The helical transmembrane segment at 63 to 83 (VLNLNCSLILLPMCRTLLAYL) threads the bilayer. Residues 84-103 (RGSQKVPSRRTRRLLDKSRT) are Cytoplasmic-facing. The helical transmembrane segment at 104-124 (FHITCGVTICIFSGVHVAAHL) threads the bilayer. The Extracellular segment spans residues 125 to 154 (VNALNFSVNYSEDFVELNAARYRDEDPRKL). Residue asparagine 133 is glycosylated (N-linked (GlcNAc...) asparagine). The helical transmembrane segment at 155–175 (LFTTVPGLTGVCMVVVLFLMI) threads the bilayer. At 176–188 (TASTYAIRVSNYD) the chain is on the cytoplasmic side. Residues 189 to 209 (IFWYTHNLFFVFYMLLTLHVS) traverse the membrane as a helical segment. Residues 210–424 (GGLLKYQTNL…SPFEESLNYE (215 aa)) lie on the Extracellular side of the membrane. The tract at residues 218 to 273 (NLDTHPPGCISLNRTSSQNISLPEYFSEHFHEPFPEGFSKPAEFTQHKFVKICMEE) is E-loop; essential for H2O2 generating catalytic activity. Asparagine 230 carries N-linked (GlcNAc...) asparagine glycosylation. The interval 248 to 575 (HEPFPEGFSK…YGTRFEYNKE (328 aa)) is mediates interaction with TLR4. Residues 304–419 (RSNKPVTIIS…DGPFGSPFEE (116 aa)) enclose the FAD-binding FR-type domain. The helical transmembrane segment at 425 to 445 (VSLCVAGGIGVTPFASILNTL) threads the bilayer. Over 446–578 (LDDWKPYKLR…RFEYNKESFS (133 aa)) the chain is Cytoplasmic.

As to quaternary structure, interacts with protein disulfide isomerase. Interacts with, relocalizes and stabilizes CYBA/p22phox. Interacts with TLR4. Interacts with PPP1R15A. Interacts with LRRC8A; this interaction prevents the ubiquitin-mediated degradation of LRRC8A. Heme is required as a cofactor. Deubiquitinated by USP19. In terms of processing, N-glycosylated and glycosylation is required for its proper function. Post-translationally, N-glycosylated. In terms of tissue distribution, expressed by distal tubular cells in kidney cortex and in endothelial cells (at protein level). Widely expressed. Strongly expressed in kidney and to a lower extent in heart, adipocytes, hepatoma, endothelial cells, skeletal muscle, brain, several brain tumor cell lines and airway epithelial cells.

It localises to the cytoplasm. Its subcellular location is the endoplasmic reticulum membrane. The protein resides in the cell membrane. It is found in the cell junction. The protein localises to the focal adhesion. It localises to the nucleus. Its subcellular location is the nucleolus. The protein resides in the perinuclear region. The enzyme catalyses NADPH + 2 O2 = 2 superoxide + NADP(+) + H(+). It carries out the reaction NADPH + O2 + H(+) = H2O2 + NADP(+). Inhibited by plumbagin. Activated by phorbol 12-myristate 13-acetate (PMA). Activated by insulin. Inhibited by diphenylene iodonium. NADPH oxidase that catalyzes predominantly the reduction of oxygen to H2O2. Can also catalyze to a smaller extent, the reduction of oxygen to superoxide. May function as an oxygen sensor regulating the KCNK3/TASK-1 potassium channel and HIF1A activity. May regulate insulin signaling cascade. May play a role in apoptosis, bone resorption and lipolysaccharide-mediated activation of NFKB. May produce superoxide in the nucleus and play a role in regulating gene expression upon cell stimulation. Promotes ferroptosis, reactive oxygen species production and reduced glutathione (GSH) levels by activating NLRP3 inflammasome activation and cytokine release. In terms of biological role, NADPH oxidase that catalyzes the generation of superoxide from molecular oxygen utilizing NADPH as an electron donor. Involved in redox signaling in vascular cells. Modulates the nuclear activation of ERK1/2 and the ELK1 transcription factor, and is capable of inducing nuclear DNA damage. Functionally, lacks superoxide-generating NADPH oxidase activity. The protein is NADPH oxidase 4 (NOX4) of Homo sapiens (Human).